The following is a 290-amino-acid chain: Acetyl-coenzyme A carboxylase carboxyl transferase subunit beta (290 aa).

A CoA carboxyltransferase N-terminal domain is found at 30-290 (IMTKCPKCKK…HAGQEVNKDA (261 aa)). Zn(2+) contacts are provided by C34, C37, C53, and C56. The C4-type zinc finger occupies 34 to 56 (CPKCKKIMYTKELSENLNVCFNC).

The protein belongs to the AccD/PCCB family. As to quaternary structure, acetyl-CoA carboxylase is a heterohexamer composed of biotin carboxyl carrier protein (AccB), biotin carboxylase (AccC) and two subunits each of ACCase subunit alpha (AccA) and ACCase subunit beta (AccD). Zn(2+) serves as cofactor.

It localises to the cytoplasm. It carries out the reaction N(6)-carboxybiotinyl-L-lysyl-[protein] + acetyl-CoA = N(6)-biotinyl-L-lysyl-[protein] + malonyl-CoA. Its pathway is lipid metabolism; malonyl-CoA biosynthesis; malonyl-CoA from acetyl-CoA: step 1/1. Functionally, component of the acetyl coenzyme A carboxylase (ACC) complex. Biotin carboxylase (BC) catalyzes the carboxylation of biotin on its carrier protein (BCCP) and then the CO(2) group is transferred by the transcarboxylase to acetyl-CoA to form malonyl-CoA. This is Acetyl-coenzyme A carboxylase carboxyl transferase subunit beta from Staphylococcus carnosus (strain TM300).